A 438-amino-acid polypeptide reads, in one-letter code: Transmembrane protease serine 11F (438 aa).

The Cytoplasmic portion of the chain corresponds to 1 to 32 (MMYAPVEFSEAEFSRAEYQRKQQFWDSVRLAL). Residues 33–53 (FTLAIVAIIGIAIGIVTHFVV) form a helical; Signal-anchor for type II membrane protein membrane-spanning segment. Residues 54–438 (EDDKSFYYLA…RDWIASKTGM (385 aa)) are Extracellular-facing. Positions 57 to 175 (KSFYYLASFK…PSFRLTPIDS (119 aa)) constitute an SEA domain. In terms of domain architecture, Peptidase S1 spans 206 to 437 (IVQGRETAME…YRDWIASKTG (232 aa)). C233 and C249 are joined by a disulfide. Catalysis depends on charge relay system residues H248 and D293. Disulfide bonds link C358/C374 and C385/C413. Residue S389 is the Charge relay system of the active site.

It belongs to the peptidase S1 family.

The protein resides in the membrane. Functionally, probable serine protease. The chain is Transmembrane protease serine 11F (TMPRSS11F) from Homo sapiens (Human).